The following is a 218-amino-acid chain: Vacuolar protein-sorting-associated protein 37 homolog 2 (218 aa).

The interval 1–51 is disordered; sequence MFNFWGSKEQQQGQSRPSPEASATPWYSPSLVTSPSSSRPQTSGQIPSHVS. A compositionally biased stretch (polar residues) spans 8–17; it reads KEQQQGQSRP. The span at 28–40 shows a compositional bias: low complexity; that stretch reads SPSLVTSPSSSRP. In terms of domain architecture, VPS37 C-terminal spans 137-218; sequence QEKLNELENQ…HLAAKTSSIG (82 aa).

Belongs to the VPS37 family. In terms of assembly, component of the endosomal sorting required for transport complex I (ESCRT-I), composed of ELC, VPS28 and VPS37. Interacts with ELC.

Its subcellular location is the endosome. Component of the ESCRT-I complex (endosomal sorting complex required for transport I), a regulator of vesicular trafficking process. Required for the sorting of endocytic ubiquitinated cargos into multivesicular bodies (MVBs). This is Vacuolar protein-sorting-associated protein 37 homolog 2 (VPS37-2) from Arabidopsis thaliana (Mouse-ear cress).